We begin with the raw amino-acid sequence, 154 residues long: Protein FAM162A (154 aa).

The segment at 76-102 is required for proapoptotic activity; sequence RFKKEDEIPETVSLEMLDAAKNKMRVK. A helical membrane pass occupies residues 103 to 120; it reads ISYLMIALTVVGCIFMVI.

It belongs to the UPF0389 family. As to quaternary structure, interacts with HSP90AB1; HSP90AB1 is essential for FAM162A mitochondrial localization and pro-apoptotic activity. Interacts with VDAC2; the interaction is probably involved in inducing mitochondrial permeability transition.

It localises to the mitochondrion membrane. In terms of biological role, proposed to be involved in regulation of apoptosis; the exact mechanism may differ between cell types/tissues. May be involved in hypoxia-induced cell death of transformed cells implicating cytochrome C release and caspase activation (such as CASP9) and inducing mitochondrial permeability transition. May be involved in hypoxia-induced cell death of neuronal cells probably by promoting release of AIFM1 from mitochondria to cytoplasm and its translocation to the nucleus; however, the involvement of caspases has been reported conflictingly. The sequence is that of Protein FAM162A (FAM162A) from Homo sapiens (Human).